We begin with the raw amino-acid sequence, 1464 residues long: Alpha-glucan water dikinase, chloroplastic (1464 aa).

A chloroplast-targeting transit peptide spans 1 to 77 (MSNSLGNNLL…KRAFSSSPHA (77 aa)). His-1069 acts as the Tele-phosphohistidine intermediate in catalysis.

This sequence belongs to the PEP-utilizing enzyme family. Homodimer. It depends on Mg(2+) as a cofactor. In terms of tissue distribution, expressed in leaves.

The protein localises to the plastid. It is found in the chloroplast. It carries out the reaction [(1-&gt;4)-alpha-D-glucosyl](n) + n ATP + n H2O = [(1-&gt;4)-6-phospho-alpha-D-glucosyl](n) + n AMP + n phosphate + 2n H(+). It catalyses the reaction ATP + protein L-histidine = ADP + protein N-phospho-L-histidine.. Mediates the incorporation of phosphate into starch-like alpha-glucan, mostly at the C-6 position of glucose units. Acts as an overall regulator of starch mobilization. Required for starch degradation, suggesting that the phosphate content of starch regulates its degradability. More active on alpha-1,6 branched amylopectin. This Solanum tuberosum (Potato) protein is Alpha-glucan water dikinase, chloroplastic (R1).